The sequence spans 330 residues: Aspartate--ammonia ligase (330 aa).

The protein belongs to the class-II aminoacyl-tRNA synthetase family. AsnA subfamily.

Its subcellular location is the cytoplasm. The catalysed reaction is L-aspartate + NH4(+) + ATP = L-asparagine + AMP + diphosphate + H(+). The protein operates within amino-acid biosynthesis; L-asparagine biosynthesis; L-asparagine from L-aspartate (ammonia route): step 1/1. The polypeptide is Aspartate--ammonia ligase (Photorhabdus laumondii subsp. laumondii (strain DSM 15139 / CIP 105565 / TT01) (Photorhabdus luminescens subsp. laumondii)).